Here is a 425-residue protein sequence, read N- to C-terminus: MANKEMFEDTVEERVINEEYKIWKKNTPFLYDLVMTHALEWPSLTVQWLPDVTRPEGKDYALHWLVLGTHTSDEQNHLVVARVQIPNDDAQFDASHYDSEKGEFGGFGSVSGKIETEIKINHEGEVNRARYMPQNPCIIATKTPSADVLVFDYTKHPSKPDPSGDCSPDLRLRGHQKEGYGLSWNSNLSGHLLSASDDHTVCLWDISAGPKEGKVVDAKAIFTGHSAVVEDVAWHLLHESLFGSVADDQKLMIWDTRSNTTSKPSHSVDAHTAEVNCLSFNPYSEFILATGSADKTVALWDLRNLKLKLHSFESHKDEIFQVHWSPHNETILASSGTDRRLNVWDLSKIGEEQSAEDAEDGPPELLFIHGGHTAKISDFSWNPNEPWVICSVSEDNIMQIWQMAENIYNDEEPDIPASELEAQGS.

WD repeat units lie at residues 47–122 (QWLP…KINH), 128–173 (RARY…LRLR), 181–217 (GLSW…KVVD), 228–269 (VVED…HSVD), 275–312 (VNCL…LHSF), 318–369 (EIFQ…LFIH), and 376–403 (ISDF…IWQM).

This sequence belongs to the WD repeat RBAP46/RBAP48/MSI1 family. Binds directly to helix 1 of the histone fold of histone H4, a region that is not accessible when H4 is in chromatin.

Its subcellular location is the nucleus. Functionally, core histone-binding subunit that may target chromatin remodeling factors, histone acetyltransferases and histone deacetylases to their histone substrates in a manner that is regulated by nucleosomal DNA. Component of several complexes which regulate chromatin metabolism. This chain is Histone-binding protein RBBP7 (rbbp7), found in Xenopus tropicalis (Western clawed frog).